A 270-amino-acid chain; its full sequence is Formamidopyrimidine-DNA glycosylase (270 aa).

Catalysis depends on proline 2, which acts as the Schiff-base intermediate with DNA. Glutamate 3 serves as the catalytic Proton donor. The active-site Proton donor; for beta-elimination activity is the lysine 58. Residues histidine 91, arginine 110, and arginine 151 each contribute to the DNA site. An FPG-type zinc finger spans residues 236–270; the sequence is FAYGRAGEFCKVCGTTLREVKLGQRASVYCPRCQR. Catalysis depends on arginine 260, which acts as the Proton donor; for delta-elimination activity.

This sequence belongs to the FPG family. As to quaternary structure, monomer. Requires Zn(2+) as cofactor.

The enzyme catalyses Hydrolysis of DNA containing ring-opened 7-methylguanine residues, releasing 2,6-diamino-4-hydroxy-5-(N-methyl)formamidopyrimidine.. The catalysed reaction is 2'-deoxyribonucleotide-(2'-deoxyribose 5'-phosphate)-2'-deoxyribonucleotide-DNA = a 3'-end 2'-deoxyribonucleotide-(2,3-dehydro-2,3-deoxyribose 5'-phosphate)-DNA + a 5'-end 5'-phospho-2'-deoxyribonucleoside-DNA + H(+). Functionally, involved in base excision repair of DNA damaged by oxidation or by mutagenic agents. Acts as a DNA glycosylase that recognizes and removes damaged bases. Has a preference for oxidized purines, such as 7,8-dihydro-8-oxoguanine (8-oxoG). Has AP (apurinic/apyrimidinic) lyase activity and introduces nicks in the DNA strand. Cleaves the DNA backbone by beta-delta elimination to generate a single-strand break at the site of the removed base with both 3'- and 5'-phosphates. The chain is Formamidopyrimidine-DNA glycosylase from Ectopseudomonas mendocina (strain ymp) (Pseudomonas mendocina).